The following is a 591-amino-acid chain: Aspartate--tRNA ligase (591 aa).

Glutamate 176 lines the L-aspartate pocket. An aspartate region spans residues 200–203 (QILK). Position 222 (arginine 222) interacts with L-aspartate. ATP contacts are provided by residues 222–224 (RDE) and glutamine 231. An L-aspartate-binding site is contributed by histidine 450. Residue glutamate 484 coordinates ATP. Arginine 491 is an L-aspartate binding site. 536-539 (GLDR) is a binding site for ATP.

Belongs to the class-II aminoacyl-tRNA synthetase family. Type 1 subfamily. Homodimer.

It is found in the cytoplasm. It catalyses the reaction tRNA(Asp) + L-aspartate + ATP = L-aspartyl-tRNA(Asp) + AMP + diphosphate. Catalyzes the attachment of L-aspartate to tRNA(Asp) in a two-step reaction: L-aspartate is first activated by ATP to form Asp-AMP and then transferred to the acceptor end of tRNA(Asp). The chain is Aspartate--tRNA ligase from Listeria monocytogenes serotype 4b (strain F2365).